The following is a 198-amino-acid chain: Nucleoside triphosphate pyrophosphatase (198 aa).

Aspartate 74 (proton acceptor) is an active-site residue.

It belongs to the Maf family. It depends on a divalent metal cation as a cofactor.

The protein localises to the cytoplasm. It carries out the reaction a ribonucleoside 5'-triphosphate + H2O = a ribonucleoside 5'-phosphate + diphosphate + H(+). The enzyme catalyses a 2'-deoxyribonucleoside 5'-triphosphate + H2O = a 2'-deoxyribonucleoside 5'-phosphate + diphosphate + H(+). Its function is as follows. Nucleoside triphosphate pyrophosphatase. May have a dual role in cell division arrest and in preventing the incorporation of modified nucleotides into cellular nucleic acids. The polypeptide is Nucleoside triphosphate pyrophosphatase (Sphingopyxis alaskensis (strain DSM 13593 / LMG 18877 / RB2256) (Sphingomonas alaskensis)).